Reading from the N-terminus, the 139-residue chain is D-ribose pyranase (139 aa).

The active-site Proton donor is the His-20. Substrate is bound by residues Asp-28, His-106, and 128-130 (YAN).

The protein belongs to the RbsD / FucU family. RbsD subfamily. Homodecamer.

It localises to the cytoplasm. It catalyses the reaction beta-D-ribopyranose = beta-D-ribofuranose. The protein operates within carbohydrate metabolism; D-ribose degradation; D-ribose 5-phosphate from beta-D-ribopyranose: step 1/2. Functionally, catalyzes the interconversion of beta-pyran and beta-furan forms of D-ribose. This chain is D-ribose pyranase, found in Glaesserella parasuis serovar 5 (strain SH0165) (Haemophilus parasuis).